A 42-amino-acid chain; its full sequence is uncharacterized protein (42 aa).

Its subcellular location is the cytoplasm. This is an uncharacterized protein from Escherichia coli (strain K12).